The following is a 132-amino-acid chain: Small ribosomal subunit protein uS8 (132 aa).

It belongs to the universal ribosomal protein uS8 family. Part of the 30S ribosomal subunit. Contacts proteins S5 and S12.

One of the primary rRNA binding proteins, it binds directly to 16S rRNA central domain where it helps coordinate assembly of the platform of the 30S subunit. The sequence is that of Small ribosomal subunit protein uS8 from Gluconacetobacter diazotrophicus (strain ATCC 49037 / DSM 5601 / CCUG 37298 / CIP 103539 / LMG 7603 / PAl5).